The sequence spans 257 residues: NH(3)-dependent NAD(+) synthetase (257 aa).

40–47 lines the ATP pocket; sequence GISGGIDS. Aspartate 46 is a binding site for Mg(2+). Arginine 121 contributes to the deamido-NAD(+) binding site. Threonine 141 provides a ligand contact to ATP. Residue glutamate 146 participates in Mg(2+) binding. Residues lysine 154 and aspartate 161 each coordinate deamido-NAD(+). Positions 170 and 192 each coordinate ATP. Deamido-NAD(+) is bound at residue 238-239; the sequence is HK.

The protein belongs to the NAD synthetase family. In terms of assembly, homodimer.

The catalysed reaction is deamido-NAD(+) + NH4(+) + ATP = AMP + diphosphate + NAD(+) + H(+). It functions in the pathway cofactor biosynthesis; NAD(+) biosynthesis; NAD(+) from deamido-NAD(+) (ammonia route): step 1/1. In terms of biological role, catalyzes the ATP-dependent amidation of deamido-NAD to form NAD. Uses ammonia as a nitrogen source. The polypeptide is NH(3)-dependent NAD(+) synthetase (Mycoplasmopsis pulmonis (strain UAB CTIP) (Mycoplasma pulmonis)).